We begin with the raw amino-acid sequence, 1273 residues long: DNA-directed RNA polymerase subunit beta (1273 aa).

Belongs to the RNA polymerase beta chain family. As to quaternary structure, the RNAP catalytic core consists of 2 alpha, 1 beta, 1 beta' and 1 omega subunit. When a sigma factor is associated with the core the holoenzyme is formed, which can initiate transcription.

It carries out the reaction RNA(n) + a ribonucleoside 5'-triphosphate = RNA(n+1) + diphosphate. Functionally, DNA-dependent RNA polymerase catalyzes the transcription of DNA into RNA using the four ribonucleoside triphosphates as substrates. The protein is DNA-directed RNA polymerase subunit beta of Onion yellows phytoplasma (strain OY-M).